Reading from the N-terminus, the 171-residue chain is Lipoprotein signal peptidase (171 aa).

4 helical membrane-spanning segments follow: residues 15 to 35, 47 to 67, 72 to 92, and 107 to 127; these read WLWL…IVMD, VLPF…SFLS, WQRW…AYWM, and ALII…GFVV. Catalysis depends on residues D128 and D146. Residues 141–161 traverse the membrane as a helical segment; that stretch reads AFNLADSTICIGAAMIILDGF.

This sequence belongs to the peptidase A8 family.

It is found in the cell inner membrane. It catalyses the reaction Release of signal peptides from bacterial membrane prolipoproteins. Hydrolyzes -Xaa-Yaa-Zaa-|-(S,diacylglyceryl)Cys-, in which Xaa is hydrophobic (preferably Leu), and Yaa (Ala or Ser) and Zaa (Gly or Ala) have small, neutral side chains.. It participates in protein modification; lipoprotein biosynthesis (signal peptide cleavage). Functionally, this protein specifically catalyzes the removal of signal peptides from prolipoproteins. The sequence is that of Lipoprotein signal peptidase from Vibrio cholerae serotype O1 (strain ATCC 39315 / El Tor Inaba N16961).